The sequence spans 292 residues: Phosphoenolpyruvate guanylyltransferase (292 aa).

Residues Thr-168, Gly-184, and Ser-187 each coordinate phosphoenolpyruvate. Residues 243-292 form a disordered region; that stretch reads PLVAEDSGGSGGESGTSAESGLSVPPGIVGGTQRRIVSDASGPGRAKKYP.

This sequence belongs to the CofC family.

The catalysed reaction is phosphoenolpyruvate + GTP + H(+) = enolpyruvoyl-2-diphospho-5'-guanosine + diphosphate. It functions in the pathway cofactor biosynthesis; coenzyme F420 biosynthesis. Its function is as follows. Guanylyltransferase that catalyzes the activation of phosphoenolpyruvate (PEP) as enolpyruvoyl-2-diphospho-5'-guanosine, via the condensation of PEP with GTP. It is involved in the biosynthesis of coenzyme F420, a hydride carrier cofactor. This is Phosphoenolpyruvate guanylyltransferase from Frankia casuarinae (strain DSM 45818 / CECT 9043 / HFP020203 / CcI3).